The primary structure comprises 118 residues: Small ribosomal subunit protein uS13 (118 aa).

Residues 93-118 (RNLPVRGQRSKTNARTRKGPRKPIKR) are disordered.

It belongs to the universal ribosomal protein uS13 family. Part of the 30S ribosomal subunit. Forms a loose heterodimer with protein S19. Forms two bridges to the 50S subunit in the 70S ribosome.

Its function is as follows. Located at the top of the head of the 30S subunit, it contacts several helices of the 16S rRNA. In the 70S ribosome it contacts the 23S rRNA (bridge B1a) and protein L5 of the 50S subunit (bridge B1b), connecting the 2 subunits; these bridges are implicated in subunit movement. Contacts the tRNAs in the A and P-sites. The chain is Small ribosomal subunit protein uS13 from Saccharophagus degradans (strain 2-40 / ATCC 43961 / DSM 17024).